The following is a 156-amino-acid chain: uncharacterized protein (156 aa).

A signal peptide spans 1-27 (MKLLVLRLILIISTIFVLLNLSCMVNG). 5 N-linked (GlcNAc...) asparagine glycosylation sites follow: N20, N83, N103, N106, and N134.

The protein localises to the secreted. This is an uncharacterized protein from Dictyostelium discoideum (Social amoeba).